Consider the following 81-residue polypeptide: Small ribosomal subunit protein bS18 (81 aa).

Belongs to the bacterial ribosomal protein bS18 family. In terms of assembly, part of the 30S ribosomal subunit. Forms a tight heterodimer with protein bS6.

In terms of biological role, binds as a heterodimer with protein bS6 to the central domain of the 16S rRNA, where it helps stabilize the platform of the 30S subunit. This Syntrophobacter fumaroxidans (strain DSM 10017 / MPOB) protein is Small ribosomal subunit protein bS18.